The following is a 362-amino-acid chain: Heat-inducible transcription repressor HrcA (362 aa).

It belongs to the HrcA family.

In terms of biological role, negative regulator of class I heat shock genes (grpE-dnaK-dnaJ and groELS operons). Prevents heat-shock induction of these operons. The sequence is that of Heat-inducible transcription repressor HrcA from Bradyrhizobium diazoefficiens (strain JCM 10833 / BCRC 13528 / IAM 13628 / NBRC 14792 / USDA 110).